The chain runs to 635 residues: MDNLRLHPDTIQEIKQRIDIVEIIGDYVVLKKRGRDHLGLCPFHDEKSPSFSVSPAKQMYYCFGCGAGGNAFNFLMELGKRSFTDVALDLARRYQIQIQTLEPAQKQELQRQLSLREQLYEIMAVAAGFYHHTLFQPQGQEALTYLDQKRCLSSATIQEFQLGYAPAGWETLYRYLVEQKRYPVAAVEQAGLIKARQSGTGYYDQFRHRLMIPIRDVQGKTIAFGSRTLGNDEPKYLNSPETPLFHKSKTLFGLDQAKTAIQKVDEAILVEGYFDVIALHESGIKQTVAALGIALSRDQVQSLMRFSQSKQIIFNFDADKAGINATQRAIQEIEPLVYSGQVNLRILNLPAGKDADEFIHSSAENKEIYQTLVKQAPLWVDWQIQQLLKQKNLKDPLDFEQVARGMVDILKRLTDQNKRAYYLQLCGEILSQGDSRLISLQVNNLSSQLTYGDRPGKNGSRHWQAKDPTSSLLEKAEALLLKIYLHCPQERPTIDQILTENDLLFSFAHHRLLWQKIDQVREYFNLDSDPDNQLPLLVQLAYLEQEGDFNSVESLFQLTETSAEDLFRANLRIPEAIAIMEKVPWESYQKHCFGKLQQLDPRTQAEDFRYYQEQWQKAHQEIQRLESQRLNQPLN.

The segment at 41 to 65 (CPFHDEKSPSFSVSPAKQMYYCFGC) adopts a CHC2-type zinc-finger fold. Residues 265–348 (DEAILVEGYF…SGQVNLRILN (84 aa)) enclose the Toprim domain. The Mg(2+) site is built by glutamate 271, aspartate 317, and aspartate 319.

Belongs to the DnaG primase family. Monomer. Interacts with DnaB. Zn(2+) is required as a cofactor. Requires Mg(2+) as cofactor.

It catalyses the reaction ssDNA + n NTP = ssDNA/pppN(pN)n-1 hybrid + (n-1) diphosphate.. RNA polymerase that catalyzes the synthesis of short RNA molecules used as primers for DNA polymerase during DNA replication. The sequence is that of DNA primase from Synechocystis sp. (strain ATCC 27184 / PCC 6803 / Kazusa).